The sequence spans 31 residues: Cytochrome b6-f complex subunit 6 (31 aa).

A helical transmembrane segment spans residues 4–24; the sequence is VISYLSLLFISFLFALTLFIV.

The protein belongs to the PetL family. The 4 large subunits of the cytochrome b6-f complex are cytochrome b6, subunit IV (17 kDa polypeptide, PetD), cytochrome f and the Rieske protein, while the 4 small subunits are PetG, PetL, PetM and PetN. The complex functions as a dimer.

The protein resides in the plastid. It localises to the chloroplast thylakoid membrane. Functionally, component of the cytochrome b6-f complex, which mediates electron transfer between photosystem II (PSII) and photosystem I (PSI), cyclic electron flow around PSI, and state transitions. PetL is important for photoautotrophic growth as well as for electron transfer efficiency and stability of the cytochrome b6-f complex. The polypeptide is Cytochrome b6-f complex subunit 6 (Chara vulgaris (Common stonewort)).